The sequence spans 485 residues: MTAKSVMVLGTTSNAGKSWLTTALCRYYARQGLKVAPYKSQNMSNNARVVVGGEIGSAQYFQALAARAVPDVRMNPLLLKPEKDTQSQVVLMGQVNAELSRMEWRGRSLSVWPVVARALDELLAENDVVVIEGAGSPAEINLKSCDIVNMRVALHANAACLLVTDIDRGGAFAHLYGTWAMLDKTEQQLIRGFVLNKFRGDASLLAPGPQMLQELTGVPTVATLPMWWQHGLPEEDGVFDDRSTAAGAVTQTVAVIAYPRISNLDEFQPLKNVPGVRLKWVRSPSELAGLGPADWVILPGSKATSADLAWLRAQGLDQAIAAHAGRGGAVLGICGGLQMLGEALIDPHGIDGNGPGLGLLPVVTVFDEAKTVQHRQAAFASVGGPWAGLSGVEVQGYEIHHGQTARHSAMAAAGDIACPVMPDGLAWQNAAGNVLGLYLHGMFEDPRVLQALFGAATPTLESVFDGLADYIGQHFEPGVLQSLIA.

In terms of domain architecture, GATase cobBQ-type spans 250–448 (TQTVAVIAYP…LHGMFEDPRV (199 aa)). The active-site Nucleophile is the cysteine 334. Histidine 440 is an active-site residue.

The protein belongs to the CobB/CobQ family. CobQ subfamily.

The protein operates within cofactor biosynthesis; adenosylcobalamin biosynthesis. Its function is as follows. Catalyzes amidations at positions B, D, E, and G on adenosylcobyrinic A,C-diamide. NH(2) groups are provided by glutamine, and one molecule of ATP is hydrogenolyzed for each amidation. In Polaromonas naphthalenivorans (strain CJ2), this protein is Cobyric acid synthase.